The following is a 105-amino-acid chain: L-rhamnose mutarotase (105 aa).

Substrate is bound at residue Tyr-19. The active-site Proton donor is the His-23. Residues Tyr-42 and 77-78 (WW) contribute to the substrate site.

It belongs to the rhamnose mutarotase family. Homodimer.

It localises to the cytoplasm. It catalyses the reaction alpha-L-rhamnose = beta-L-rhamnose. It functions in the pathway carbohydrate metabolism; L-rhamnose metabolism. Involved in the anomeric conversion of L-rhamnose. This is L-rhamnose mutarotase from Mesorhizobium japonicum (strain LMG 29417 / CECT 9101 / MAFF 303099) (Mesorhizobium loti (strain MAFF 303099)).